Reading from the N-terminus, the 301-residue chain is UDP-3-O-acyl-N-acetylglucosamine deacetylase (301 aa).

3 residues coordinate Zn(2+): His81, His237, and Asp241. The active-site Proton donor is His264.

The protein belongs to the LpxC family. The cofactor is Zn(2+).

It catalyses the reaction a UDP-3-O-[(3R)-3-hydroxyacyl]-N-acetyl-alpha-D-glucosamine + H2O = a UDP-3-O-[(3R)-3-hydroxyacyl]-alpha-D-glucosamine + acetate. The protein operates within glycolipid biosynthesis; lipid IV(A) biosynthesis; lipid IV(A) from (3R)-3-hydroxytetradecanoyl-[acyl-carrier-protein] and UDP-N-acetyl-alpha-D-glucosamine: step 2/6. Its function is as follows. Catalyzes the hydrolysis of UDP-3-O-myristoyl-N-acetylglucosamine to form UDP-3-O-myristoylglucosamine and acetate, the committed step in lipid A biosynthesis. In Leptospira interrogans serogroup Icterohaemorrhagiae serovar copenhageni (strain Fiocruz L1-130), this protein is UDP-3-O-acyl-N-acetylglucosamine deacetylase.